The sequence spans 270 residues: Type III pantothenate kinase (270 aa).

11-18 (DAGNSRIK) is a binding site for ATP. Substrate is bound by residues Y96 and 103–106 (GSDR). D105 acts as the Proton acceptor in catalysis. T129 is an ATP binding site. T195 is a substrate binding site.

Belongs to the type III pantothenate kinase family. Homodimer. It depends on NH4(+) as a cofactor. K(+) serves as cofactor.

Its subcellular location is the cytoplasm. The enzyme catalyses (R)-pantothenate + ATP = (R)-4'-phosphopantothenate + ADP + H(+). It participates in cofactor biosynthesis; coenzyme A biosynthesis; CoA from (R)-pantothenate: step 1/5. In terms of biological role, catalyzes the phosphorylation of pantothenate (Pan), the first step in CoA biosynthesis. The polypeptide is Type III pantothenate kinase (Paraburkholderia phytofirmans (strain DSM 17436 / LMG 22146 / PsJN) (Burkholderia phytofirmans)).